Reading from the N-terminus, the 585-residue chain is Arginine--tRNA ligase (585 aa).

Positions 131-141 (ANPTGPMHVGH) match the 'HIGH' region motif.

It belongs to the class-I aminoacyl-tRNA synthetase family. Monomer.

The protein localises to the cytoplasm. The enzyme catalyses tRNA(Arg) + L-arginine + ATP = L-arginyl-tRNA(Arg) + AMP + diphosphate. The polypeptide is Arginine--tRNA ligase (Brucella anthropi (strain ATCC 49188 / DSM 6882 / CCUG 24695 / JCM 21032 / LMG 3331 / NBRC 15819 / NCTC 12168 / Alc 37) (Ochrobactrum anthropi)).